Consider the following 473-residue polypeptide: Response regulator protein FleR (473 aa).

One can recognise a Response regulatory domain in the interval 4–118 (KVLLVEDDRA…ALLDLVARHA (115 aa)). A 4-aspartylphosphate modification is found at Asp53. A Sigma-54 factor interaction domain is found at 130–359 (PVALEPASRQ…LDNAIQRALI (230 aa)). ATP is bound by residues 158–165 (GESGTGKE) and 221–230 (ADGGTILLDE).

In terms of biological role, member of the two-component regulatory system FleS/FleR that regulates the expression of multiple genes involved in flagellar synthesis, adhesion, swarming, motility and antibiotic resistance. May function as a transcriptional activator by direct binding to a cis-acting sequence upstream of the target genes. The sequence is that of Response regulator protein FleR from Pseudomonas aeruginosa (strain ATCC 15692 / DSM 22644 / CIP 104116 / JCM 14847 / LMG 12228 / 1C / PRS 101 / PAO1).